The sequence spans 596 residues: Inactive metallocarboxypeptidase ecm14 (596 aa).

A signal peptide spans 1 to 26; sequence MSQSHSILSSLILLVAIIFCVPHVIA. The propeptide occupies 27–190; the sequence is VPWTTDGHAQ…SYPSMAYADA (164 aa). Residue Asn114 is glycosylated (N-linked (GlcNAc...) asparagine). Residues 220–540 form the Peptidase M14 domain; it reads NYQPLSVIIP…NVIKYFGDFL (321 aa). Zn(2+) is bound by residues His285 and Glu288. Substrate-binding positions include 285-288, Arg343, and 360-361; these read HARE and DR. Cys354 and Cys376 are oxidised to a cystine. N-linked (GlcNAc...) asparagine glycosylation occurs at Asn400. His416 contributes to the Zn(2+) binding site. 417–418 provides a ligand contact to substrate; it reads SY.

This sequence belongs to the peptidase M14 family. The cofactor is Zn(2+).

The protein localises to the vacuole. It localises to the secreted. Inactive carboxypeptidase that may play a role in cell wall organization and biogenesis. This chain is Inactive metallocarboxypeptidase ecm14 (ecm14), found in Sclerotinia sclerotiorum (strain ATCC 18683 / 1980 / Ss-1) (White mold).